An 89-amino-acid chain; its full sequence is Mapacalcine (89 aa).

A Glutamine amide modification is found at Gln-89.

As to quaternary structure, homodimer. In terms of processing, contains disulfide bonds which may also be involved in dimerization.

In terms of biological role, blocks calcium currents via interaction with a yet unknown target protein. Has no effect on L-type, T-type, N-type or P/Q-type voltage-gated calcium channels (VGCC). Has no effect on voltage-gated potassium or chloride channels. Blocks non-L-type VGCC calcium currents in mouse duodenal myocytes (IC(50)=0.2 uM). Blocks calcium influx induced by hypoxia/reoxygenation in rat hepatocytes. In Pione vastifica (Boring sponge), this protein is Mapacalcine.